A 250-amino-acid chain; its full sequence is uncharacterized protein (250 aa).

Positions 207–226 are enriched in basic and acidic residues; it reads LNDRDAINKSEEARKAREEV. Residues 207-250 are disordered; it reads LNDRDAINKSEEARKAREEVFIPSEPSKPSIASKRSSASKSTKS. Over residues 233–250 the composition is skewed to low complexity; it reads SKPSIASKRSSASKSTKS.

It localises to the plastid. The protein resides in the chloroplast. This is an uncharacterized protein from Chlorella vulgaris (Green alga).